Here is a 666-residue protein sequence, read N- to C-terminus: Probable potassium transport system protein Kup (666 aa).

Transmembrane regions (helical) follow at residues 16–36 (GFIIALGIVYGDIGTSPLYTM), 58–78 (ISLIIWTLTLITTIKYVLVAL), 99–119 (TPWLIVPAVIGGATLLSDGAL), 141–161 (IFQNQSNVIFATLFILLLLFA), 167–187 (TGVIGKLFGPIMFIWFAFLGI), 221–241 (IFILGSIFLATTGAEALYSDL), 253–273 (WPFVKVAIILSYCGQGAWILA), 292–312 (FTMHVVILATLAAIIASQALI), 343–363 (TYIPVINWFLFAITTSIVLLF), 373–393 (YGLAITITMLMTTILLSFFLI), 402–422 (VLLMMIFFGILEGIFFLASAV), and 424–444 (FMHGGYVVVIIAVAIIFIMTI).

This sequence belongs to the HAK/KUP transporter (TC 2.A.72) family.

The protein resides in the cell membrane. The enzyme catalyses K(+)(in) + H(+)(in) = K(+)(out) + H(+)(out). Functionally, transport of potassium into the cell. Likely operates as a K(+):H(+) symporter. This is Probable potassium transport system protein Kup from Streptococcus agalactiae serotype V (strain ATCC BAA-611 / 2603 V/R).